A 119-amino-acid polypeptide reads, in one-letter code: Beta-2-microglobulin (119 aa).

An N-terminal signal peptide occupies residues 1 to 20 (MARFVVVPLLVLVSLFGLEA). The region spanning 25–114 (PKIQVYSRYP…VTFSTPKTVK (90 aa)) is the Ig-like C1-type domain. The cysteines at positions 45 and 100 are disulfide-linked.

The protein belongs to the beta-2-microglobulin family. In terms of assembly, heterodimer of an alpha chain and a beta chain. Beta-2-microglobulin is the beta-chain of major histocompatibility complex class I molecules.

The protein resides in the secreted. Functionally, component of the class I major histocompatibility complex (MHC). Involved in the presentation of peptide antigens to the immune system. The sequence is that of Beta-2-microglobulin (B2M) from Saguinus oedipus (Cotton-top tamarin).